Here is a 445-residue protein sequence, read N- to C-terminus: Phosphoglucosamine mutase (445 aa).

S99 serves as the catalytic Phosphoserine intermediate. The Mg(2+) site is built by S99, D242, D244, and D246. At S99 the chain carries Phosphoserine.

It belongs to the phosphohexose mutase family. It depends on Mg(2+) as a cofactor. In terms of processing, activated by phosphorylation.

It carries out the reaction alpha-D-glucosamine 1-phosphate = D-glucosamine 6-phosphate. Its function is as follows. Catalyzes the conversion of glucosamine-6-phosphate to glucosamine-1-phosphate. In Campylobacter jejuni subsp. jejuni serotype O:6 (strain 81116 / NCTC 11828), this protein is Phosphoglucosamine mutase.